Here is an 85-residue protein sequence, read N- to C-terminus: MATKKAGGSTRNGRDSEAKRLGVKRFGGESVLAGSIIVRQRGTKFHAGSNVGMGKDHTLFATADGKVKFEVKGEKNRKYVSIIAE.

A disordered region spans residues 1–20; that stretch reads MATKKAGGSTRNGRDSEAKR.

The protein belongs to the bacterial ribosomal protein bL27 family.

This chain is Large ribosomal subunit protein bL27, found in Glaesserella parasuis serovar 5 (strain SH0165) (Haemophilus parasuis).